A 318-amino-acid chain; its full sequence is Ribosomal RNA small subunit methyltransferase H (318 aa).

S-adenosyl-L-methionine-binding positions include 34–36, Asp-52, Phe-79, Asp-100, and Gln-107; that span reads GGY. Residues 286 to 318 form a disordered region; it reads GPAPDEARANPRARSAKLRAAARTAAPAWETVS. The span at 303–318 shows a compositional bias: low complexity; that stretch reads LRAAARTAAPAWETVS.

It belongs to the methyltransferase superfamily. RsmH family.

Its subcellular location is the cytoplasm. The enzyme catalyses cytidine(1402) in 16S rRNA + S-adenosyl-L-methionine = N(4)-methylcytidine(1402) in 16S rRNA + S-adenosyl-L-homocysteine + H(+). Its function is as follows. Specifically methylates the N4 position of cytidine in position 1402 (C1402) of 16S rRNA. This is Ribosomal RNA small subunit methyltransferase H from Paramagnetospirillum magneticum (strain ATCC 700264 / AMB-1) (Magnetospirillum magneticum).